The following is a 265-amino-acid chain: NAD kinase 1 (265 aa).

The Proton acceptor role is filled by aspartate 45. Residues 45-46, 122-123, arginine 148, aspartate 150, and alanine 185 each bind NAD(+); these read DG and NE.

The protein belongs to the NAD kinase family. Requires a divalent metal cation as cofactor.

The protein resides in the cytoplasm. It catalyses the reaction NAD(+) + ATP = ADP + NADP(+) + H(+). Functionally, involved in the regulation of the intracellular balance of NAD and NADP, and is a key enzyme in the biosynthesis of NADP. Catalyzes specifically the phosphorylation on 2'-hydroxyl of the adenosine moiety of NAD to yield NADP. The polypeptide is NAD kinase 1 (Bacillus anthracis).